The primary structure comprises 327 residues: Putative HTH-type transcriptional regulatory protein MM_0444 (327 aa).

In terms of domain architecture, HTH cro/C1-type spans 132–190 (LKKARTTQSMSLGTLASMVGVSRRTISKYEEEGMDASIDVVLHLEDIFGVELAKPIDIL). Positions 143–162 (LGTLASMVGVSRRTISKYEE) form a DNA-binding region, H-T-H motif. The segment at 195–214 (SRKPRKKAEPEKEEPKGKPG) is disordered. Residues 201 to 211 (KAEPEKEEPKG) are compositionally biased toward basic and acidic residues.

This chain is Putative HTH-type transcriptional regulatory protein MM_0444, found in Methanosarcina mazei (strain ATCC BAA-159 / DSM 3647 / Goe1 / Go1 / JCM 11833 / OCM 88) (Methanosarcina frisia).